The chain runs to 111 residues: Macrodomain Ori protein (111 aa).

This sequence belongs to the MaoP family.

Its function is as follows. Involved in the organization of the Ori region of the chromosome into a macrodomain (MD). It constrains DNA mobility in the Ori macrodomain and limits long-distance DNA interactions with other chromosomal regions. The chain is Macrodomain Ori protein from Haemophilus influenzae (strain ATCC 51907 / DSM 11121 / KW20 / Rd).